The primary structure comprises 583 residues: Glycine--tRNA ligase (583 aa).

R100 and E166 together coordinate substrate. ATP is bound by residues 198-200 (RNE), 208-213 (VRLREF), 328-329 (EV), and 443-446 (GTDR). Substrate is bound at residue 213–217 (FTIME). 439-443 (EPSFG) lines the substrate pocket.

Belongs to the class-II aminoacyl-tRNA synthetase family.

It is found in the cytoplasm. It carries out the reaction tRNA(Gly) + glycine + ATP = glycyl-tRNA(Gly) + AMP + diphosphate. Its function is as follows. Catalyzes the attachment of glycine to tRNA(Gly). The polypeptide is Glycine--tRNA ligase (Aeropyrum pernix (strain ATCC 700893 / DSM 11879 / JCM 9820 / NBRC 100138 / K1)).